The sequence spans 625 residues: tRNA uridine 5-carboxymethylaminomethyl modification enzyme MnmG (625 aa).

14–19 (GAGHAG) lines the FAD pocket. 273-287 (GPRYCPSIEDKIVRF) contributes to the NAD(+) binding site.

The protein belongs to the MnmG family. As to quaternary structure, homodimer. Heterotetramer of two MnmE and two MnmG subunits. FAD is required as a cofactor.

It localises to the cytoplasm. Its function is as follows. NAD-binding protein involved in the addition of a carboxymethylaminomethyl (cmnm) group at the wobble position (U34) of certain tRNAs, forming tRNA-cmnm(5)s(2)U34. The sequence is that of tRNA uridine 5-carboxymethylaminomethyl modification enzyme MnmG from Clostridium botulinum (strain Hall / ATCC 3502 / NCTC 13319 / Type A).